We begin with the raw amino-acid sequence, 200 residues long: Probable GTP-binding protein EngB (200 aa).

An EngB-type G domain is found at 22-197 (NLPEYAFIGR…LDYIDSINRS (176 aa)). GTP-binding positions include 30 to 37 (GRSNVGKS), 57 to 61 (GKTLL), 75 to 78 (DLPG), 142 to 145 (TKAD), and 173 to 178 (HFVSSS). Mg(2+) is bound by residues Ser37 and Thr59.

The protein belongs to the TRAFAC class TrmE-Era-EngA-EngB-Septin-like GTPase superfamily. EngB GTPase family. Mg(2+) is required as a cofactor.

Necessary for normal cell division and for the maintenance of normal septation. This chain is Probable GTP-binding protein EngB, found in Phocaeicola vulgatus (strain ATCC 8482 / DSM 1447 / JCM 5826 / CCUG 4940 / NBRC 14291 / NCTC 11154) (Bacteroides vulgatus).